The chain runs to 718 residues: Centromere/kinetochore protein zw10 (718 aa).

This sequence belongs to the ZW10 family.

The protein resides in the cytoplasm. It localises to the nucleus. It is found in the chromosome. Its subcellular location is the centromere. The protein localises to the kinetochore. Required for accurate chromosome segregation. In Drosophila pseudoobscura pseudoobscura (Fruit fly), this protein is Centromere/kinetochore protein zw10 (mit(1)15).